The primary structure comprises 208 residues: MYHYLFSCHKSQESIDGLIEQVKQLLNHVEMEQKAYFLNLLTARVAEFQNELKSEASNTINKQQILIQYEKFAKTLLICIKQPERTSYAIHNYHKGFYYPVAIHDKIKPDPTIENAAIATLGVSLALLLGSIPTFIFNPLFGVIMVSLAVTLLLPSGFYLLIPDSPDTTSKKEEEKRIFMEGAKIINPDVRIEEFDEQPYLSSSLIKT.

This is an uncharacterized protein from Legionella pneumophila subsp. pneumophila (strain Philadelphia 1 / ATCC 33152 / DSM 7513).